The sequence spans 447 residues: Growth/differentiation factor 7 (447 aa).

A signal peptide spans 1–19 (MDLSAAAALCLWLLSACRP). A propeptide spanning residues 20–318 (RDGLEAAAVL…AVTAGRRRRR (299 aa)) is cleaved from the precursor. Residue Asn80 is glycosylated (N-linked (GlcNAc...) asparagine). The disordered stretch occupies residues 292–346 (LAAQPPPDPGTGTGSPRAVTAGRRRRRTALAGTRTAQGSGGGAGRGHGRRGRSRC). Basic residues predominate over residues 337 to 346 (GHGRRGRSRC). Disulfide bonds link Cys346–Cys412, Cys375–Cys444, and Cys379–Cys446.

The protein belongs to the TGF-beta family. In terms of assembly, homodimer; disulfide-linked. Highly expressed in the primary aera of brain neocortex.

The protein localises to the secreted. Its function is as follows. May play an active role in the motor area of the primate neocortex. The protein is Growth/differentiation factor 7 (GDF7) of Chlorocebus aethiops (Green monkey).